A 436-amino-acid chain; its full sequence is Citrate synthase (436 aa).

Catalysis depends on residues His-311 and Asp-370.

Belongs to the citrate synthase family. As to quaternary structure, homohexamer.

The catalysed reaction is oxaloacetate + acetyl-CoA + H2O = citrate + CoA + H(+). The protein operates within carbohydrate metabolism; tricarboxylic acid cycle; isocitrate from oxaloacetate: step 1/2. Allosterically inhibited by NADH. This chain is Citrate synthase (gltA), found in Rickettsia prowazekii (strain Madrid E).